The chain runs to 180 residues: Small ribosomal subunit protein uS5 (180 aa).

Residues 24–87 (MIEKLVAVNR…EQARKNLVSV (64 aa)) form the S5 DRBM domain.

Belongs to the universal ribosomal protein uS5 family. In terms of assembly, part of the 30S ribosomal subunit. Contacts proteins S4 and S8.

Functionally, with S4 and S12 plays an important role in translational accuracy. Its function is as follows. Located at the back of the 30S subunit body where it stabilizes the conformation of the head with respect to the body. This chain is Small ribosomal subunit protein uS5, found in Stenotrophomonas maltophilia (strain R551-3).